Here is a 481-residue protein sequence, read N- to C-terminus: MAEKITTRSADYSQWYIDLVRSAKLADYSDVRGCMVIRPNGYAIWEKMQTALDRMFKETGHVNAYFPLFIPESFIAKEAEHIEGFAPECAVVTHGGGEELAEKLYVRPTSETIIWSSYKKWIQSYRDLPILINQWANVVRWEMRTRLFLRTTEFLWQEGHTAHATPEESQEEVVRMINVYKTFAENYMALPVIIGKKTDSEKFAGAVDTWCIEAMMQDSKALQAGTSHNLGQNFAKAFDCQFQTRDGKLDYVWATSWGVSTRLIGALIMAHSDDRGLVLPPKLATRQVVIIPILKGDKAAVCEKAHAISRTLSANGIPAFVDDSEQNSPGWKFAEYELQGIPLRIELGPRDIQNGTCIVARRDTLEKTELALDDTLSVSISEILNAIQQNLFDRALEFRNEHTFEASSYSEFREMVENGFVIAHWDGTAETEAKIKEETKATIRVLPEEPDYISRYAMHEAGTCIYSGNPAAQKAVFAKAY.

It belongs to the class-II aminoacyl-tRNA synthetase family. ProS type 3 subfamily. Homodimer.

The protein resides in the cytoplasm. The enzyme catalyses tRNA(Pro) + L-proline + ATP = L-prolyl-tRNA(Pro) + AMP + diphosphate. Its function is as follows. Catalyzes the attachment of proline to tRNA(Pro) in a two-step reaction: proline is first activated by ATP to form Pro-AMP and then transferred to the acceptor end of tRNA(Pro). The sequence is that of Proline--tRNA ligase from Chlorobium phaeobacteroides (strain DSM 266 / SMG 266 / 2430).